A 454-amino-acid polypeptide reads, in one-letter code: Exopolyphosphatase PRUNE1 (454 aa).

Met1 carries the N-acetylmethionine modification. Residues Asp28, Asp30, Asp106, and Asp179 each contribute to the Mn(2+) site. The DHH motif signature appears at 106-108 (DHH). The essential for homodimerization stretch occupies residues 394 to 421 (SLISGLSQDEEDPPLPPTPMNSLVDECP). Residues 397–420 (SGLSQDEEDPPLPPTPMNSLVDEC) are disordered. The residue at position 400 (Ser400) is a Phosphoserine. Thr411 bears the Phosphothreonine mark. Ser415 carries the phosphoserine modification.

The protein belongs to the PPase class C family. Prune subfamily. As to quaternary structure, homooligomer. Able to homodimerize via its C-terminal domain. Interacts with NME1. Interacts with GSK3; at focal adhesion complexes where paxillin and vinculin are colocalized. Interacts with alpha and beta tubulin. Mn(2+) is required as a cofactor.

The protein localises to the cytoplasm. The protein resides in the nucleus. It is found in the cell junction. It localises to the focal adhesion. It catalyses the reaction diphosphate + H2O = 2 phosphate + H(+). Its activity is regulated as follows. Activated by magnesium ions and inhibited by manganese ions. Inhibited by dipyridamole, moderately sensitive to IBMX and inhibited by vinpocetine. In terms of biological role, phosphodiesterase (PDE) that has higher activity toward cAMP than cGMP, as substrate. Plays a role in cell proliferation, migration and differentiation, and acts as a negative regulator of NME1. Plays a role in the regulation of neurogenesis. Involved in the regulation of microtubule polymerization. This chain is Exopolyphosphatase PRUNE1 (Prune1), found in Mus musculus (Mouse).